The following is a 589-amino-acid chain: Putative ABC transporter ATP-binding protein MG015 (589 aa).

Helical transmembrane passes span 9–29 (LLYVFLCIVLGILYGIANPIL), 66–86 (LTIVSVTVFVAYALIFVFNVA), 161–181 (LIFLLSPVIALISLSILATLI), 251–271 (IFLFSWFGFISNITYLVSISI), 280–300 (IPSFGISVINYSFMLSYIASL), and 303–323 (ITLALDQIFTLWNLVQLGVVS). In terms of domain architecture, ABC transmembrane type-1 spans 9 to 319 (LLYVFLCIVL…IFTLWNLVQL (311 aa)). The ABC transporter domain maps to 352-586 (IRFENVAFGY…NGFYARLKQS (235 aa)). 385 to 392 (GPTGAGKS) provides a ligand contact to ATP.

Belongs to the ABC transporter superfamily.

It localises to the cell membrane. The chain is Putative ABC transporter ATP-binding protein MG015 from Mycoplasma genitalium (strain ATCC 33530 / DSM 19775 / NCTC 10195 / G37) (Mycoplasmoides genitalium).